A 151-amino-acid chain; its full sequence is 3-dehydroquinate dehydratase (151 aa).

Tyr-24 serves as the catalytic Proton acceptor. Substrate contacts are provided by Asn-76, His-82, and Asp-89. His-102 (proton donor) is an active-site residue. Substrate contacts are provided by residues 103–104 and Arg-113; that span reads LS.

The protein belongs to the type-II 3-dehydroquinase family. Homododecamer.

The catalysed reaction is 3-dehydroquinate = 3-dehydroshikimate + H2O. Its pathway is metabolic intermediate biosynthesis; chorismate biosynthesis; chorismate from D-erythrose 4-phosphate and phosphoenolpyruvate: step 3/7. Functionally, catalyzes a trans-dehydration via an enolate intermediate. This is 3-dehydroquinate dehydratase from Acinetobacter baumannii (strain ATCC 17978 / DSM 105126 / CIP 53.77 / LMG 1025 / NCDC KC755 / 5377).